We begin with the raw amino-acid sequence, 50 residues long: Sperm protamine P1 (50 aa).

It belongs to the protamine P1 family. As to expression, testis.

Its subcellular location is the nucleus. The protein localises to the chromosome. Functionally, protamines substitute for histones in the chromatin of sperm during the haploid phase of spermatogenesis. They compact sperm DNA into a highly condensed, stable and inactive complex. In Natalus stramineus (Mexican funnel-eared bat), this protein is Sperm protamine P1 (PRM1).